A 420-amino-acid chain; its full sequence is Ammonia monooxygenase beta subunit (420 aa).

An N-terminal signal peptide occupies residues 1–25; the sequence is MGIKNLYKRGVMGLYGVAYAVAALA. The Cu cation site is built by His38, His142, and His144. The next 2 membrane-spanning stretches (helical) occupy residues 193–213 and 240–260; these read GIFWHVVWMSIGIFWIGVFTA and ITWVLAILTLALVWGGYRYTE.

As to quaternary structure, the soluble ammonia monooxygenase is a nonamer composed of three alpha subunits (AmoA), three beta subunits (AmoB) and three gamma subunits (Cytochrome c1 PetC). The cofactor is Cu(2+).

It is found in the cell membrane. The protein localises to the cytoplasm. The enzyme catalyses AH2 + NH4(+) + O2 = hydroxylamine + A + H2O + H(+). In vitro, inhibited by acetylene. Functionally, part of the ammonia monooxygenase complex, which catalyzes the oxidation of ammonia to hydroxylamine, the first reaction in the process of ammonia oxidation to nitrite. The sequence is that of Ammonia monooxygenase beta subunit from Nitrosomonas europaea (strain ATCC 19718 / CIP 103999 / KCTC 2705 / NBRC 14298).